We begin with the raw amino-acid sequence, 317 residues long: Transaldolase (317 aa).

Lys126 serves as the catalytic Schiff-base intermediate with substrate.

Belongs to the transaldolase family. Type 1 subfamily. Homodimer.

The protein resides in the cytoplasm. The enzyme catalyses D-sedoheptulose 7-phosphate + D-glyceraldehyde 3-phosphate = D-erythrose 4-phosphate + beta-D-fructose 6-phosphate. Its pathway is carbohydrate degradation; pentose phosphate pathway; D-glyceraldehyde 3-phosphate and beta-D-fructose 6-phosphate from D-ribose 5-phosphate and D-xylulose 5-phosphate (non-oxidative stage): step 2/3. In terms of biological role, transaldolase is important for the balance of metabolites in the pentose-phosphate pathway. The chain is Transaldolase from Burkholderia orbicola (strain MC0-3).